Here is a 392-residue protein sequence, read N- to C-terminus: Bifunctional enzyme Fae/Hps (392 aa).

Residues 1–161 (MFLVGEALIG…YEKERSVHPV (161 aa)) form a formaldehyde-activating enzyme region. Histidine 17 acts as the Proton donor in catalysis. Positions 19, 48, 66, 68, and 83 each coordinate substrate. A 3-hexulose-6-phosphate synthase region spans residues 162–392 (MGYRVMRLWD…IDQYRIMTDF (231 aa)).

In the N-terminal section; belongs to the formaldehyde-activating enzyme family. The protein in the C-terminal section; belongs to the HPS/KGPDC family. HPS subfamily.

The enzyme catalyses 5,6,7,8-tetrahydromethanopterin + formaldehyde = 5,10-methylenetetrahydromethanopterin + H2O. It carries out the reaction D-ribulose 5-phosphate + formaldehyde = D-arabino-hex-3-ulose 6-phosphate. The protein operates within carbohydrate biosynthesis; D-ribose 5-phosphate biosynthesis. Its function is as follows. Catalyzes the condensation of formaldehyde with tetrahydromethanopterin (H(4)MPT) to 5,10-methylenetetrahydromethanopterin. In terms of biological role, catalyzes the reversible formation of ribulose-5-phosphate and formaldehyde from 3-hexulose-6-phosphate. The sequence is that of Bifunctional enzyme Fae/Hps from Methanothrix thermoacetophila (strain DSM 6194 / JCM 14653 / NBRC 101360 / PT) (Methanosaeta thermophila).